We begin with the raw amino-acid sequence, 247 residues long: 2,3-bisphosphoglycerate-dependent phosphoglycerate mutase (247 aa).

Substrate contacts are provided by residues 8–15 (RHGESQWN), 21–22 (TG), R60, 87–90 (ERHY), K98, 114–115 (RR), and 183–184 (GN). The active-site Tele-phosphohistidine intermediate is H9. E87 functions as the Proton donor/acceptor in the catalytic mechanism.

The protein belongs to the phosphoglycerate mutase family. BPG-dependent PGAM subfamily.

It catalyses the reaction (2R)-2-phosphoglycerate = (2R)-3-phosphoglycerate. It participates in carbohydrate degradation; glycolysis; pyruvate from D-glyceraldehyde 3-phosphate: step 3/5. In terms of biological role, catalyzes the interconversion of 2-phosphoglycerate and 3-phosphoglycerate. The polypeptide is 2,3-bisphosphoglycerate-dependent phosphoglycerate mutase (Chlorobaculum tepidum (strain ATCC 49652 / DSM 12025 / NBRC 103806 / TLS) (Chlorobium tepidum)).